Here is a 655-residue protein sequence, read N- to C-terminus: RNA-binding protein EWS (655 aa).

An EAD (Gln/Pro/Thr-rich) region spans residues 1–285 (MASTDYSTYS…GVYGQESGGF (285 aa)). A run of 31 repeats spans residues 8 to 16 (TYSQAAAQQ), 17 to 27 (GYSAYTAQPTQ), 28 to 34 (GYAQTTQ), 35 to 42 (AYGQQSYG), 43 to 50 (TYGQPTDV), 51 to 59 (SYTQAQTTA), 60 to 68 (TYGQTAYAT), 69 to 75 (SYGQPPT), 76 to 84 (GYSTPTAPQ), 85 to 91 (AYSQPVQ), 92 to 110 (GYGT…TTQA), 111 to 116 (SYAAQT), 117 to 125 (AYGTQPAYP), 126 to 156 (TYGQ…SSTG), 157 to 163 (GYNQPSL), 164 to 170 (GYGQSNY), 171 to 177 (SYPQVPG), 178 to 188 (SYPMQPVTAPP), 189 to 193 (SYPPT), 194 to 201 (SYSSSQPT), 202 to 206 (SYDQS), 207 to 212 (SYSQQN), 213 to 218 (TYGQPS), 219 to 224 (SYGQQS), 225 to 230 (SYGQQS), 231 to 238 (SYGQQPPT), 239 to 245 (SYPPQTG), 246 to 252 (SYSQAPS), 253 to 259 (QYSQQSS), 260 to 276 (SYGQ…SSMG), and 277 to 285 (VYGQESGGF). A 31 X approximate tandem repeats region spans residues 8–285 (TYSQAAAQQG…GVYGQESGGF (278 aa)). Residues 121–350 (QPAYPTYGQQ…EGPDLDLGLP (230 aa)) are disordered. 2 stretches are compositionally biased toward polar residues: residues 127–137 (YGQQPTATAPT) and 146–172 (AETS…NYSY). The segment covering 192-266 (PTSYSSSQPT…QSSSYGQQSS (75 aa)) has biased composition (low complexity). The IQ domain maps to 256-285 (QQSSSYGQQSSFRQDHPSSMGVYGQESGGF). Serine 266 carries the phosphoserine; by PKC modification. Asymmetric dimethylarginine is present on residues arginine 300, arginine 302, arginine 304, arginine 309, arginine 314, arginine 317, and arginine 321. A compositionally biased stretch (gly residues) spans 308–334 (DRGGMSRGGRGGGRGGLGAGERGGFNK). Positions 335-350 (PGGPMDEGPDLDLGLP) are enriched in low complexity. In terms of domain architecture, RRM spans 360–446 (SAIYVQGLND…SKLKVSLARK (87 aa)). At lysine 438 the chain carries N6-acetyllysine. Disordered regions lie at residues 447-524 (KPPM…WQCP) and 544-655 (APKP…DRPY). 2 positions are modified to asymmetric dimethylarginine: arginine 454 and arginine 463. Arginine 470 is subject to Asymmetric dimethylarginine; alternate. Residue arginine 470 is modified to Omega-N-methylarginine; alternate. The segment covering 471–489 (GGPGGPGGPGGPMGRMGGR) has biased composition (gly residues). Position 485 is an omega-N-methylarginine (arginine 485). Position 489 is an asymmetric dimethylarginine; by PRMT8 (arginine 489). An asymmetric dimethylarginine mark is found at arginine 493, arginine 499, and arginine 502. An Asymmetric dimethylarginine; alternate modification is found at arginine 505. Arginine 505 carries the post-translational modification Omega-N-methylarginine; alternate. A RanBP2-type zinc finger spans residues 517–548 (RAGDWQCPNPGCGNQNFAWRTECNQCKAPKPE). Residues 550-559 (FLPPPFPPPG) are compositionally biased toward pro residues. 2 positions are modified to asymmetric dimethylarginine: arginine 562 and arginine 564. Positions 565-590 (GGPGGMRGGRGGLMDRGGPGGMFRGG) are enriched in gly residues. Position 571 is an asymmetric dimethylarginine; alternate; by PRMT8 (arginine 571). Residue arginine 571 is modified to Omega-N-methylarginine; alternate; by PRMT8. Residues arginine 574, arginine 580, arginine 588, and arginine 591 each carry the asymmetric dimethylarginine modification. Residues 591–605 (RGGDRGGFRGGRGMD) are compositionally biased toward basic and acidic residues. Position 595 is an asymmetric dimethylarginine; alternate; by PRMT8 (arginine 595). Position 595 is an omega-N-methylarginine; alternate; by PRMT8 (arginine 595). Asymmetric dimethylarginine is present on arginine 599. Arginine 602 is modified (asymmetric dimethylarginine; by PRMT8). Arginine 606 carries the asymmetric dimethylarginine; alternate; by PRMT8 modification. Omega-N-methylarginine; alternate; by PRMT8 is present on arginine 606. Residues 606–617 (RGGFGGGRRGGP) are compositionally biased toward gly residues. At arginine 614 the chain carries Asymmetric dimethylarginine; alternate. Arginine 614 carries the post-translational modification Omega-N-methylarginine; alternate. Asymmetric dimethylarginine occurs at positions 632 and 635. The Nuclear localization signal signature appears at 638 to 655 (PGKMDKGEHRQERRDRPY). Basic and acidic residues predominate over residues 640–655 (KMDKGEHRQERRDRPY).

This sequence belongs to the RRM TET family. In terms of assembly, binds RNA, POLR2C, SF1 and calmodulin. Interacts with PTK2B and TDRD3. Forms a complex with REC8, PRDM9, SYCP3 and SYCP1; complex formation is dependent of phosphorylated form of REC8 and requires PRDM9 bound to hotspot DNA; EWSR1 joins PRDM9 with the chromosomal axis through REC8. Phosphorylated; calmodulin-binding inhibits phosphorylation of Ser-266. Post-translationally, highly methylated on arginine residues. Methylation is mediated by PRMT1 and, at lower level by PRMT8.

The protein resides in the nucleus. It localises to the cytoplasm. Its subcellular location is the cell membrane. Functionally, binds to ssRNA containing the consensus sequence 5'-AGGUAA-3'. Might function as a transcriptional repressor. The polypeptide is RNA-binding protein EWS (Ewsr1) (Mus musculus (Mouse)).